We begin with the raw amino-acid sequence, 465 residues long: MLLVWSLALLLGAVAGKEVCYDRLGCFSDDSPWSGIVERPLKVLPWSPADVNTRFLLYTNENQDNYQQITADSSRIQSSNFKTNRKTRFIIHGFIDKGEESWLANMCKKMFQVESVNCICVDWKGGSRTGYTQASQNIRIVGAEVAYFVDFLRTQLGYSPSNVHVIGHSLGSHAAGEAGRRTNGAIGRITGLDPAEPCFEGTPELVRLDPSDAQFVDAIHTDGAPIVPNLGFGMSQTVGHLDFFPNGGIEMPGCQKNILSQIVDIDGIWEGTRDFAACNHLRSYKYYTDSIVNPTGFAAFSCASYSVFSANKCFPCPSGGCPQMGHYADRYSGKTNGVGQKFYLNTGDKSNFSRWRYKVSVTLSGQKVTGHILVSLFGNAGNSKQYEIYKGSLHPGYTHSNEFDSDVDVGDLQRVKFIWYNNVINPSLPRVGASSISVERNDGRVFKFCSAETVREDVLLTLNAC.

The first 16 residues, 1–16 (MLLVWSLALLLGAVAG), serve as a signal peptide directing secretion. Disulfide bonds link cysteine 20-cysteine 26 and cysteine 107-cysteine 118. The active-site Nucleophile is serine 169. Aspartate 193 serves as the catalytic Charge relay system. Residues glutamate 204, arginine 207, aspartate 209, and aspartate 212 each coordinate Ca(2+). The cysteines at positions 254 and 278 are disulfide-linked. Residue histidine 280 is the Charge relay system of the active site. Intrachain disulfides connect cysteine 302/cysteine 313, cysteine 316/cysteine 321, and cysteine 449/cysteine 465. The PLAT domain occupies 355–465 (WRYKVSVTLS…EDVLLTLNAC (111 aa)).

It belongs to the AB hydrolase superfamily. Lipase family. Forms a 1:1 stoichiometric complex with (pro)colipase/CLPS. Expressed in many tissues with highest expression in liver. During hibernation there is a significant increases in expression in heart, white adipose tissue (WAT), and testis; but not in pancreas.

It is found in the secreted. It catalyses the reaction a triacylglycerol + H2O = a diacylglycerol + a fatty acid + H(+). The enzyme catalyses 1,2,3-tributanoylglycerol + H2O = dibutanoylglycerol + butanoate + H(+). The catalysed reaction is 1,2,3-tri-(9Z-octadecenoyl)-glycerol + H2O = di-(9Z)-octadecenoylglycerol + (9Z)-octadecenoate + H(+). It carries out the reaction all-trans-retinyl hexadecanoate + H2O = all-trans-retinol + hexadecanoate + H(+). It catalyses the reaction 1,2-di-(9Z-octadecenoyl)-glycerol + H2O = (9Z-octadecenoyl)-glycerol + (9Z)-octadecenoate + H(+). Inhibited by bile salts, is reactivated by (pro)colipase/CLPS. Functionally, plays an important role in fat metabolism. It preferentially splits the esters of long-chain fatty acids at positions 1 and 3, producing mainly 2-monoacylglycerol and free fatty acids, and shows considerably higher activity against insoluble emulsified substrates than against soluble ones. Plays a role in hibernation as a key enzyme that shows high activity at low temperatures. When expressed in the hibernating heart it liberates fatty acids from triglycerides at temperatures as low as 0 degrees Celsius. The chain is Pancreatic triacylglycerol lipase (PNLIP) from Ictidomys tridecemlineatus (Thirteen-lined ground squirrel).